The primary structure comprises 175 residues: Probable RNA-binding protein EIF1AD (175 aa).

An S1-like domain is found at Thr-5–Asp-89. Over residues Glu-116–Asp-128 the composition is skewed to basic and acidic residues. The segment at Glu-116–Lys-175 is disordered. Residues Asp-129 to Asp-163 are compositionally biased toward acidic residues. A compositionally biased stretch (polar residues) spans Tyr-165 to Lys-175.

It belongs to the EIF1AD family.

In Caenorhabditis elegans, this protein is Probable RNA-binding protein EIF1AD.